Consider the following 49-residue polypeptide: Putative metallothionein MT1DP (49 aa).

The segment at M1–C29 is beta. C5, C7, C13, C15, C19, C21, C26, C29, C33, C34, C36, C37, C41, C44, and C48 together coordinate a divalent metal cation. An alpha region spans residues K30–T49.

This sequence belongs to the metallothionein superfamily. Type 1 family.

Its function is as follows. Metallothioneins have a high content of cysteine residues that bind various heavy metals. In Homo sapiens (Human), this protein is Putative metallothionein MT1DP (MT1DP).